The sequence spans 121 residues: Protein yippee-like 5 (121 aa).

A Yippee domain is found at 13–110 (RLFSCANCDT…LERALVRESE (98 aa)). Residues Cys-17, Cys-20, Cys-73, and Cys-76 each coordinate Zn(2+). The residue at position 118 (Ser-118) is a Phosphoserine.

The protein belongs to the yippee family. Identified in the CTLH complex that contains GID4, RANBP9 and/or RANBP10, MKLN1, MAEA, RMND5A (or alternatively its paralog RMND5B), GID8, ARMC8, WDR26 and YPEL5. Within this complex, MAEA, RMND5A (or alternatively its paralog RMND5B), GID8, WDR26, and RANBP9 and/or RANBP10 form the catalytic core, while GID4, MKLN1, ARMC8 and YPEL5 have ancillary roles. Interacts with RANBP9 and RANBP10.

It is found in the nucleus. It localises to the cytoplasm. The protein localises to the cytoskeleton. Its subcellular location is the microtubule organizing center. The protein resides in the centrosome. It is found in the spindle pole. It localises to the midbody. Functionally, component of the CTLH E3 ubiquitin-protein ligase complex that selectively accepts ubiquitin from UBE2H and mediates ubiquitination and subsequent proteasomal degradation of the transcription factor HBP1. Required for normal cell proliferation. The protein is Protein yippee-like 5 (YPEL5) of Bos taurus (Bovine).